We begin with the raw amino-acid sequence, 329 residues long: GTP 3',8-cyclase (329 aa).

The Radical SAM core domain occupies 8 to 234 (AFARKFYYLR…QLRQRSDGPA (227 aa)). R17 contacts GTP. Residues C24 and C28 each coordinate [4Fe-4S] cluster. Y30 provides a ligand contact to S-adenosyl-L-methionine. C31 serves as a coordination point for [4Fe-4S] cluster. R68 contributes to the GTP binding site. G72 provides a ligand contact to S-adenosyl-L-methionine. T99 contacts GTP. Residue S123 coordinates S-adenosyl-L-methionine. Position 160 (K160) interacts with GTP. M194 is an S-adenosyl-L-methionine binding site. [4Fe-4S] cluster is bound by residues C257 and C260. GTP is bound at residue 262–264 (RLR). C274 contacts [4Fe-4S] cluster.

Belongs to the radical SAM superfamily. MoaA family. As to quaternary structure, monomer and homodimer. The cofactor is [4Fe-4S] cluster.

The catalysed reaction is GTP + AH2 + S-adenosyl-L-methionine = (8S)-3',8-cyclo-7,8-dihydroguanosine 5'-triphosphate + 5'-deoxyadenosine + L-methionine + A + H(+). Its pathway is cofactor biosynthesis; molybdopterin biosynthesis. Functionally, catalyzes the cyclization of GTP to (8S)-3',8-cyclo-7,8-dihydroguanosine 5'-triphosphate. This Escherichia coli O7:K1 (strain IAI39 / ExPEC) protein is GTP 3',8-cyclase.